Consider the following 117-residue polypeptide: Immunoglobulin heavy variable 4-38-2 (117 aa).

An N-terminal signal peptide occupies residues Met-1–Ser-19. The tract at residues Gln-20–Ser-44 is framework-1. One can recognise an Ig-like domain in the interval Gln-20–Arg-117. Cys-41 and Cys-115 are oxidised to a cystine. Positions Gly-45–Tyr-53 are complementarity-determining-1. Residues Trp-54–Ser-70 are framework-2. Residues Ile-71–Thr-77 are complementarity-determining-2. Residues Tyr-78–Cys-115 form a framework-3 region. Residues Ala-116 to Arg-117 form a complementarity-determining-3 region.

Immunoglobulins are composed of two identical heavy chains and two identical light chains; disulfide-linked.

The protein resides in the secreted. Its subcellular location is the cell membrane. Functionally, v region of the variable domain of immunoglobulin heavy chains that participates in the antigen recognition. Immunoglobulins, also known as antibodies, are membrane-bound or secreted glycoproteins produced by B lymphocytes. In the recognition phase of humoral immunity, the membrane-bound immunoglobulins serve as receptors which, upon binding of a specific antigen, trigger the clonal expansion and differentiation of B lymphocytes into immunoglobulins-secreting plasma cells. Secreted immunoglobulins mediate the effector phase of humoral immunity, which results in the elimination of bound antigens. The antigen binding site is formed by the variable domain of one heavy chain, together with that of its associated light chain. Thus, each immunoglobulin has two antigen binding sites with remarkable affinity for a particular antigen. The variable domains are assembled by a process called V-(D)-J rearrangement and can then be subjected to somatic hypermutations which, after exposure to antigen and selection, allow affinity maturation for a particular antigen. This is Immunoglobulin heavy variable 4-38-2 from Homo sapiens (Human).